Reading from the N-terminus, the 195-residue chain is Recombination protein RecR (195 aa).

The segment at 56–71 (CRQCHSFSDDDICPIC) adopts a C4-type zinc-finger fold. The Toprim domain occupies 79-174 (SVLCVVETAA…KVTRIAQGIP (96 aa)).

Belongs to the RecR family.

Its function is as follows. May play a role in DNA repair. It seems to be involved in an RecBC-independent recombinational process of DNA repair. It may act with RecF and RecO. The chain is Recombination protein RecR from Psychrobacter sp. (strain PRwf-1).